Reading from the N-terminus, the 353-residue chain is Sphingosine 1-phosphate receptor 2 (353 aa).

At 1 to 34 (MGSLYSEYLNPNKVQEHYNYTKETLETQETTSRQ) the chain is on the extracellular side. Residue Asn19 is glycosylated (N-linked (GlcNAc...) asparagine). The helical transmembrane segment at 35-59 (VASAFIVILCCAIVVENLLVLIAVA) threads the bilayer. Topologically, residues 60 to 66 (RNSKFHS) are cytoplasmic. A helical membrane pass occupies residues 67 to 95 (AMYLFLGNLAASDLLAGVAFVANTLLSGS). At 96–109 (VTLRLTPVQWFARE) the chain is on the extracellular side. The chain crosses the membrane as a helical span at residues 110–128 (GSAFITLSASVFSLLAIAI). Residues 129–147 (ERHVAIAKVKLYGSDKSCR) lie on the Cytoplasmic side of the membrane. The chain crosses the membrane as a helical span at residues 148-173 (MLLLIGASWLISLVLGGLPILGWNCL). Residues 174–189 (GHLEACSTVLPLYAKH) lie on the Extracellular side of the membrane. Residues 190 to 210 (YVLCVVTIFSIILLAIVALYV) form a helical membrane-spanning segment. The Cytoplasmic segment spans residues 211-233 (RIYCVVRSSHADMAAPQTLALLK). Residues 234 to 255 (TVTIVLGVFIVCWLPAFSILLL) traverse the membrane as a helical segment. Topologically, residues 256-271 (DYACPVHSCPILYKAH) are extracellular. Residues 272 to 292 (YFFAVSTLNSLLNPVIYTWRS) form a helical membrane-spanning segment. The Cytoplasmic portion of the chain corresponds to 293–353 (RDLRREVLRP…PTFLEGNTVV (61 aa)). Cys305 carries S-palmitoyl cysteine lipidation.

It belongs to the G-protein coupled receptor 1 family.

It localises to the cell membrane. In terms of biological role, receptor for the lysosphingolipid sphingosine 1-phosphate (S1P). S1P is a bioactive lysophospholipid that elicits diverse physiological effects on most types of cells and tissues. When expressed in rat HTC4 hepatoma cells, is capable of mediating S1P-induced cell proliferation and suppression of apoptosis. Receptor for the chemokine-like protein FAM19A5. Mediates the inhibitory effect of FAM19A5 on vascular smooth muscle cell proliferation and migration. In lymphoid follicles, couples the binding of S1P to the activation of GNA13 and downstream inhibition of AKT activation leading to suppression of germinal center (GC) B cell growth and migration outside the GC niche. The sequence is that of Sphingosine 1-phosphate receptor 2 (S1PR2) from Homo sapiens (Human).